A 150-amino-acid chain; its full sequence is 3-dehydroquinate dehydratase (150 aa).

Y26 functions as the Proton acceptor in the catalytic mechanism. Residues N77, H83, and D90 each contribute to the substrate site. H103 serves as the catalytic Proton donor. Residues 104 to 105 and R114 each bind substrate; that span reads LS.

This sequence belongs to the type-II 3-dehydroquinase family. As to quaternary structure, homododecamer.

It carries out the reaction 3-dehydroquinate = 3-dehydroshikimate + H2O. The protein operates within metabolic intermediate biosynthesis; chorismate biosynthesis; chorismate from D-erythrose 4-phosphate and phosphoenolpyruvate: step 3/7. Catalyzes a trans-dehydration via an enolate intermediate. This chain is 3-dehydroquinate dehydratase, found in Yersinia pseudotuberculosis serotype O:1b (strain IP 31758).